The following is a 667-amino-acid chain: Long-chain-fatty-acid--CoA ligase ACSBG2 (667 aa).

ATP is bound by residues 227 to 235, 418 to 423, aspartate 496, arginine 511, and arginine 624; these read TSGTTGTPK and EIYGMS.

It belongs to the ATP-dependent AMP-binding enzyme family. Bubblegum subfamily. Testis- and brainstem-specific. Expressed in pubertal and adult testis. Enriched in germ cells and Sertoli cells while present at a lower level in Leydig cells. Present in testicular Sertoli cells and large motoneurons in the medulla oblongata and cervical spinal cord (at protein level).

The protein localises to the cytoplasm. It is found in the membrane. The catalysed reaction is a long-chain fatty acid + ATP + CoA = a long-chain fatty acyl-CoA + AMP + diphosphate. It catalyses the reaction (5Z,8Z,11Z,14Z)-eicosatetraenoate + ATP + CoA = (5Z,8Z,11Z,14Z)-eicosatetraenoyl-CoA + AMP + diphosphate. The enzyme catalyses hexadecanoate + ATP + CoA = hexadecanoyl-CoA + AMP + diphosphate. It carries out the reaction (9Z)-octadecenoate + ATP + CoA = (9Z)-octadecenoyl-CoA + AMP + diphosphate. The catalysed reaction is (9Z,12Z)-octadecadienoate + ATP + CoA = (9Z,12Z)-octadecadienoyl-CoA + AMP + diphosphate. It catalyses the reaction tetracosanoate + ATP + CoA = tetracosanoyl-CoA + AMP + diphosphate. In terms of biological role, catalyzes the conversion of fatty acids such as long chain and very long-chain fatty acids to their active form acyl-CoAs for both synthesis of cellular lipids, and degradation via beta-oxidation. Can activate diverse saturated, monosaturated and polyunsaturated fatty acids. Has increased ability to activate oleic and linoleic acid. May play a role in spermatogenesis. This is Long-chain-fatty-acid--CoA ligase ACSBG2 from Mus musculus (Mouse).